The primary structure comprises 518 residues: Membrane-bound lytic murein transglycosylase F (518 aa).

The N-terminal stretch at 1-21 (MKKLKINYLFIGILALLLAVA) is a signal peptide. Residues 22–269 (LWPSIPWFGK…RIEEKYLGHG (248 aa)) are non-LT domain. An LT domain region spans residues 270 to 518 (DDFDYVDTRT…SRKGSEEKQN (249 aa)). Residue E314 is part of the active site.

It in the N-terminal section; belongs to the bacterial solute-binding protein 3 family. The protein in the C-terminal section; belongs to the transglycosylase Slt family.

Its subcellular location is the cell outer membrane. The catalysed reaction is Exolytic cleavage of the (1-&gt;4)-beta-glycosidic linkage between N-acetylmuramic acid (MurNAc) and N-acetylglucosamine (GlcNAc) residues in peptidoglycan, from either the reducing or the non-reducing ends of the peptidoglycan chains, with concomitant formation of a 1,6-anhydrobond in the MurNAc residue.. In terms of biological role, murein-degrading enzyme that degrades murein glycan strands and insoluble, high-molecular weight murein sacculi, with the concomitant formation of a 1,6-anhydromuramoyl product. Lytic transglycosylases (LTs) play an integral role in the metabolism of the peptidoglycan (PG) sacculus. Their lytic action creates space within the PG sacculus to allow for its expansion as well as for the insertion of various structures such as secretion systems and flagella. In Shigella sonnei (strain Ss046), this protein is Membrane-bound lytic murein transglycosylase F.